A 177-amino-acid polypeptide reads, in one-letter code: MAGRDRDPLVVGRVVGDVLDPFVRTTNLRVSFGNRNVSNGCELKPSMVTHQPRVEVGGNEMRTFYTLVMVDPDAPSPSDPNLREYLHWLVTDIPGTTGASFGQEVMCYESPRPSMGIHRFVFVLFQQLGRQTVYAPGWRQNFNTRDFAELYNLGPPVAAVYFNCQREAGSGGRRMYP.

This sequence belongs to the phosphatidylethanolamine-binding protein family. As to expression, expressed in leaves but not in shoot apex.

Its function is as follows. Involved in the regulation of vernalization and of flowering time; this process in essential for flowering in cv. Bd29-1 but seems do not occur in cv. Bd21. The polypeptide is Protein VERNALIZATION 3 (Brachypodium distachyon (Purple false brome)).